Here is a 317-residue protein sequence, read N- to C-terminus: 4-hydroxy-3-methylbut-2-enyl diphosphate reductase (317 aa).

C12 lines the [4Fe-4S] cluster pocket. 2 residues coordinate (2E)-4-hydroxy-3-methylbut-2-enyl diphosphate: H43 and H81. Dimethylallyl diphosphate-binding residues include H43 and H81. Residues H43 and H81 each coordinate isopentenyl diphosphate. C103 contributes to the [4Fe-4S] cluster binding site. (2E)-4-hydroxy-3-methylbut-2-enyl diphosphate is bound at residue H131. H131 contacts dimethylallyl diphosphate. H131 lines the isopentenyl diphosphate pocket. The active-site Proton donor is E133. (2E)-4-hydroxy-3-methylbut-2-enyl diphosphate is bound at residue T172. C200 is a binding site for [4Fe-4S] cluster. Positions 228, 230, and 273 each coordinate (2E)-4-hydroxy-3-methylbut-2-enyl diphosphate. The dimethylallyl diphosphate site is built by S228, N230, and S273. Isopentenyl diphosphate is bound by residues S228, N230, and S273.

Belongs to the IspH family. It depends on [4Fe-4S] cluster as a cofactor.

It catalyses the reaction isopentenyl diphosphate + 2 oxidized [2Fe-2S]-[ferredoxin] + H2O = (2E)-4-hydroxy-3-methylbut-2-enyl diphosphate + 2 reduced [2Fe-2S]-[ferredoxin] + 2 H(+). The catalysed reaction is dimethylallyl diphosphate + 2 oxidized [2Fe-2S]-[ferredoxin] + H2O = (2E)-4-hydroxy-3-methylbut-2-enyl diphosphate + 2 reduced [2Fe-2S]-[ferredoxin] + 2 H(+). Its pathway is isoprenoid biosynthesis; dimethylallyl diphosphate biosynthesis; dimethylallyl diphosphate from (2E)-4-hydroxy-3-methylbutenyl diphosphate: step 1/1. It functions in the pathway isoprenoid biosynthesis; isopentenyl diphosphate biosynthesis via DXP pathway; isopentenyl diphosphate from 1-deoxy-D-xylulose 5-phosphate: step 6/6. Its function is as follows. Catalyzes the conversion of 1-hydroxy-2-methyl-2-(E)-butenyl 4-diphosphate (HMBPP) into a mixture of isopentenyl diphosphate (IPP) and dimethylallyl diphosphate (DMAPP). Acts in the terminal step of the DOXP/MEP pathway for isoprenoid precursor biosynthesis. In Exiguobacterium sp. (strain ATCC BAA-1283 / AT1b), this protein is 4-hydroxy-3-methylbut-2-enyl diphosphate reductase.